Reading from the N-terminus, the 567-residue chain is Mitochondrial distribution and morphology protein 34 (567 aa).

In terms of domain architecture, SMP-LTD spans 1 to 224 (MSFKFNEESF…LPSALFNMSR (224 aa)). Residues 392 to 416 (NKATETSSNLNADSEITPVSSSHNA) show a composition bias toward polar residues. The tract at residues 392 to 453 (NKATETSSNL…NRSSSFTSSI (62 aa)) is disordered. Low complexity predominate over residues 417-452 (TSSVNTITSLTTSSLGSTAGSSNSKNTNRSSSFTSS).

The protein belongs to the MDM34 family. As to quaternary structure, component of the ER-mitochondria encounter structure (ERMES) or MDM complex, composed of MMM1, MDM10, MDM12 and MDM34.

The protein localises to the mitochondrion outer membrane. Functionally, component of the ERMES/MDM complex, which serves as a molecular tether to connect the endoplasmic reticulum (ER) and mitochondria. Components of this complex are involved in the control of mitochondrial shape and protein biogenesis, and function in nonvesicular lipid trafficking between the ER and mitochondria. MDM34 is required for the interaction of the ER-resident membrane protein MMM1 and the outer mitochondrial membrane-resident beta-barrel protein MDM10. The sequence is that of Mitochondrial distribution and morphology protein 34 from Vanderwaltozyma polyspora (strain ATCC 22028 / DSM 70294 / BCRC 21397 / CBS 2163 / NBRC 10782 / NRRL Y-8283 / UCD 57-17) (Kluyveromyces polysporus).